The following is a 287-amino-acid chain: MELVIISGRSGSGKSVALRALEDVGYYCVDNLPFPLIAELASFLLASDCSAVVSLDIRNFPENLTRIDELLHQLSQLTINTKMIFLDCESATLIRRYSDSRRLHPLSNQDLSLASAIELENTLLDPLRQQADYLIDTTHSSPHELAANLRHILRGSTEKELNIVFESFGFKYGLSADADYVFDVRFLPNPHWHAELRAMTGLEQPVIDFLERQTEVHNFIYQTRNYLETWLPMLEKNNRSYLTIAFGCTGGKHRSVFITEQLAKYFQSRGKNVKIRHRSLEKYHKKT.

8 to 15 (GRSGSGKS) is an ATP binding site. A GTP-binding site is contributed by 56–59 (DIRN).

This sequence belongs to the RapZ-like family.

Displays ATPase and GTPase activities. The sequence is that of Nucleotide-binding protein HD_0584 from Haemophilus ducreyi (strain 35000HP / ATCC 700724).